We begin with the raw amino-acid sequence, 149 residues long: UPF0178 protein SERP0336 (149 aa).

Belongs to the UPF0178 family.

In Staphylococcus epidermidis (strain ATCC 35984 / DSM 28319 / BCRC 17069 / CCUG 31568 / BM 3577 / RP62A), this protein is UPF0178 protein SERP0336.